Here is a 536-residue protein sequence, read N- to C-terminus: Bifunctional purine biosynthesis protein PurH (536 aa).

Residues 8–158 (IPAPDEVRIK…KNHAYVTVVT (151 aa)) enclose the MGS-like domain.

Belongs to the PurH family.

The catalysed reaction is (6R)-10-formyltetrahydrofolate + 5-amino-1-(5-phospho-beta-D-ribosyl)imidazole-4-carboxamide = 5-formamido-1-(5-phospho-D-ribosyl)imidazole-4-carboxamide + (6S)-5,6,7,8-tetrahydrofolate. It carries out the reaction IMP + H2O = 5-formamido-1-(5-phospho-D-ribosyl)imidazole-4-carboxamide. It participates in purine metabolism; IMP biosynthesis via de novo pathway; 5-formamido-1-(5-phospho-D-ribosyl)imidazole-4-carboxamide from 5-amino-1-(5-phospho-D-ribosyl)imidazole-4-carboxamide (10-formyl THF route): step 1/1. The protein operates within purine metabolism; IMP biosynthesis via de novo pathway; IMP from 5-formamido-1-(5-phospho-D-ribosyl)imidazole-4-carboxamide: step 1/1. The protein is Bifunctional purine biosynthesis protein PurH of Sinorhizobium medicae (strain WSM419) (Ensifer medicae).